Consider the following 143-residue polypeptide: Nucleoside diphosphate kinase (143 aa).

The 132-residue stretch at 1–132 folds into the NDPK-like domain; it reads MVKPDGVQRG…LWFSPQELCQ (132 aa). K3, F51, R79, T85, R96, V103, and N106 together coordinate ADP. 5 residues coordinate ATP: K3, F51, R79, T85, and R96. Residue N106 participates in ATP binding. Catalysis depends on H109, which acts as the Pros-phosphohistidine intermediate.

This sequence belongs to the NDK family. In terms of assembly, homohexamer. Mg(2+) is required as a cofactor.

It carries out the reaction a 2'-deoxyribonucleoside 5'-diphosphate + ATP = a 2'-deoxyribonucleoside 5'-triphosphate + ADP. The catalysed reaction is a ribonucleoside 5'-diphosphate + ATP = a ribonucleoside 5'-triphosphate + ADP. It catalyses the reaction GDP + ATP = GTP + ADP. The protein operates within purine metabolism; purine nucleotide biosynthesis. Functionally, major role in the synthesis of nucleoside triphosphates other than ATP. The ATP gamma phosphate is transferred to the NDP beta phosphate via a ping-pong mechanism, using a phosphorylated active-site intermediate. This Schistosoma mansoni (Blood fluke) protein is Nucleoside diphosphate kinase.